Consider the following 215-residue polypeptide: Pyrrolidone-carboxylate peptidase (215 aa).

Active-site residues include Glu-81, Cys-144, and His-168.

This sequence belongs to the peptidase C15 family. In terms of assembly, homotetramer.

The protein localises to the cytoplasm. It carries out the reaction Release of an N-terminal pyroglutamyl group from a polypeptide, the second amino acid generally not being Pro.. Its function is as follows. Removes 5-oxoproline from various penultimate amino acid residues except L-proline. The protein is Pyrrolidone-carboxylate peptidase of Bacillus velezensis (strain DSM 23117 / BGSC 10A6 / LMG 26770 / FZB42) (Bacillus amyloliquefaciens subsp. plantarum).